The primary structure comprises 178 residues: PEST proteolytic signal-containing nuclear protein (178 aa).

Basic and acidic residues predominate over residues 1–15 (MADGKAGDEKPEKSQ). A disordered region spans residues 1–82 (MADGKAGDEK…FAIGSQTTKK (82 aa)). N-acetylalanine is present on alanine 2. Residues 37–47 (SSSNGGESSSR) show a composition bias toward low complexity. Serine 53 is modified (phosphoserine). Lysine 64 is modified (N6-acetyllysine). Phosphoserine is present on residues serine 77, serine 87, and serine 119. Residues 134–178 (NIGRDTPTSAGPNSFNKGKHGFSDNQKLWERNIKSHLGNVHDQDN) form a disordered region. Threonine 139 carries the post-translational modification Phosphothreonine. Over residues 139–149 (TPTSAGPNSFN) the composition is skewed to polar residues. Serine 147 is modified (phosphoserine). An N6-acetyllysine mark is found at lysine 150 and lysine 152. Residues 160–178 (KLWERNIKSHLGNVHDQDN) show a composition bias toward basic and acidic residues.

As to quaternary structure, interacts with UHRF2/NIRF. In terms of processing, ubiquitinated; mediated by UHRF2 and leading to its subsequent proteasomal degradation. Post-translationally, N-terminally acetylated in a HYPK-dependent manner by the NatA acetyltransferase complex which is composed of NAA10 and NAA15.

It is found in the nucleus. May be involved in cell cycle regulation. This Homo sapiens (Human) protein is PEST proteolytic signal-containing nuclear protein (PCNP).